Here is a 244-residue protein sequence, read N- to C-terminus: High affinity immunoglobulin epsilon receptor subunit beta (244 aa).

At 1 to 59 (MDTESNRRANLALPQEPSSVPAFEVLEISPQEVSSGRLLKSASSPPLHTWLTVLKKEQE) the chain is on the cytoplasmic side. Residues 60 to 79 (FLGVTQILTAMICLCFGTVV) traverse the membrane as a helical segment. At 80 to 97 (CSVLDISHIEGDIFSSFK) the chain is on the extracellular side. Residues 98 to 117 (AGYPFWGAIFFSISGMLSII) form a helical membrane-spanning segment. The Cytoplasmic portion of the chain corresponds to 118 to 130 (SERRNATYLVRGS). Residues 131–150 (LGANTASSIAGGTGITILII) form a helical membrane-spanning segment. The Extracellular portion of the chain corresponds to 151–180 (NLKKSLAYIHIHSCQKFFETKCFMASFSTE). Residues 181–200 (IVVMMLFLTILGLGSAVSLT) form a helical membrane-spanning segment. Residues 201–244 (ICGAGEELKGNKVPEDRVYEELNIYSATYSELEDPGEMSPPIDL) are Cytoplasmic-facing. 2 positions are modified to phosphotyrosine: Y219 and Y225. Position 226 is a phosphoserine (S226). Y229 is subject to Phosphotyrosine.

This sequence belongs to the MS4A family. Tetramer of an alpha chain, a beta chain, and two disulfide linked gamma chains. Binds LILRB1. Interacts with FGR, FES/FPS and LYN. In terms of processing, phosphorylated on tyrosine residues by LYN. Found on the surface of mast cells and basophils.

The protein resides in the membrane. In terms of biological role, high affinity receptor that binds to the Fc region of immunoglobulins epsilon. Aggregation of FCER1 by multivalent antigens is required for the full mast cell response, including the release of preformed mediators (such as histamine) by degranulation and de novo production of lipid mediators and cytokines. Also mediates the secretion of important lymphokines. Binding of allergen to receptor-bound IgE leads to cell activation and the release of mediators responsible for the manifestations of allergy. The chain is High affinity immunoglobulin epsilon receptor subunit beta (MS4A2) from Homo sapiens (Human).